The following is a 367-amino-acid chain: Histidinol-phosphate aminotransferase (367 aa).

An N6-(pyridoxal phosphate)lysine modification is found at lysine 230.

The protein belongs to the class-II pyridoxal-phosphate-dependent aminotransferase family. Histidinol-phosphate aminotransferase subfamily. As to quaternary structure, homodimer. The cofactor is pyridoxal 5'-phosphate.

It catalyses the reaction L-histidinol phosphate + 2-oxoglutarate = 3-(imidazol-4-yl)-2-oxopropyl phosphate + L-glutamate. It participates in amino-acid biosynthesis; L-histidine biosynthesis; L-histidine from 5-phospho-alpha-D-ribose 1-diphosphate: step 7/9. This Thermobifida fusca (strain YX) protein is Histidinol-phosphate aminotransferase.